We begin with the raw amino-acid sequence, 957 residues long: Collagen alpha-1(I) chain (957 aa).

The tract at residues 1–957 is disordered; sequence GPMGPSGPRG…PGPPGPPGPP (957 aa). Residues 23–33 are compositionally biased toward low complexity; the sequence is FPGEPGASGPM. The span at 45 to 59 shows a compositional bias: basic and acidic residues; the sequence is NGDDGEAGKPGRPGE. At serine 87 the chain carries Phosphoserine. Low complexity-rich tracts occupy residues 95–113 and 125–138; these read DAGP…PRGI and PAGA…TGAA. A compositionally biased stretch (pro residues) spans 140 to 152; the sequence is PPGPTGPAGPPGF. 2 stretches are compositionally biased toward low complexity: residues 186-210 and 219-228; these read AGAA…RGPS and SGPKGNSGEP. Residues 277–286 are compositionally biased toward gly residues; it reads GERGGPGSRG. 8 stretches are compositionally biased toward low complexity: residues 330 to 356, 365 to 384, 426 to 453, 488 to 516, 576 to 590, 603 to 618, 649 to 665, and 707 to 731; these read KGIT…QDGR, ARGQ…AGEP, QGPA…PGEQ, PRGA…QGAP, AGPS…ARGA, AGFA…PGAK, SAGP…AGRV, and AGEK…QGIA. Serine 579 carries the phosphoserine modification. Composition is skewed to pro residues over residues 772–782 and 818–833; these read PPGPMGPPGIA and AGPP…PGPV. Positions 854 to 868 are enriched in low complexity; sequence IGPVGARGAAGPQGP. Positions 869–883 are enriched in basic and acidic residues; it reads RGDKGETGEQGDRGI. Over residues 902–935 the composition is skewed to low complexity; that stretch reads PGEQGPSGASGPAGPRGPPGSAGSPGKDGINGIP. The span at 937–957 shows a compositional bias: pro residues; it reads PIGPPGPRPGPPGPPGPPGPP.

The protein belongs to the fibrillar collagen family. In terms of assembly, trimers of one alpha 2(I) and two alpha 1(I) chains. In terms of processing, prolines at the third position of the tripeptide repeating unit (G-X-Y) are hydroxylated in some or all of the chains. Forms the fibrils of tendon, ligaments and bones. In bones, the fibrils are mineralized with calcium hydroxyapatite.

It is found in the secreted. The protein resides in the extracellular space. It localises to the extracellular matrix. In terms of biological role, type I collagen is a member of group I collagen (fibrillar forming collagen). The sequence is that of Collagen alpha-1(I) chain from Hippopotamus amphibius (Hippopotamus).